The chain runs to 38 residues: Cytochrome b6-f complex subunit 5 (38 aa).

The chain crosses the membrane as a helical span at residues 5–25 (LLLGIVLGLIPVTLAGLFVAA).

This sequence belongs to the PetG family. The 4 large subunits of the cytochrome b6-f complex are cytochrome b6, subunit IV (17 kDa polypeptide, PetD), cytochrome f and the Rieske protein, while the 4 small subunits are PetG, PetL, PetM and PetN. The complex functions as a dimer.

The protein resides in the cellular thylakoid membrane. Its function is as follows. Component of the cytochrome b6-f complex, which mediates electron transfer between photosystem II (PSII) and photosystem I (PSI), cyclic electron flow around PSI, and state transitions. PetG is required for either the stability or assembly of the cytochrome b6-f complex. In Picosynechococcus sp. (strain ATCC 27264 / PCC 7002 / PR-6) (Agmenellum quadruplicatum), this protein is Cytochrome b6-f complex subunit 5.